We begin with the raw amino-acid sequence, 720 residues long: Biotin biosynthesis bifunctional protein BioWF (720 aa).

The disordered stretch occupies residues 1 to 39 (MRFSIKMRASARVSSSPSTSDGSSGDHTESRDRADRHIS). Low complexity predominate over residues 8 to 23 (RASARVSSSPSTSDGS). Positions 24-39 (SGDHTESRDRADRHIS) are enriched in basic and acidic residues. R314 is a substrate binding site. 401–402 (GY) is a binding site for pyridoxal 5'-phosphate. H439 provides a ligand contact to substrate. Residues S488, 513-516 (DDAH), and 564-567 (TASK) contribute to the pyridoxal 5'-phosphate site. The residue at position 567 (K567) is an N6-(pyridoxal phosphate)lysine. T684 contributes to the substrate binding site.

It in the N-terminal section; belongs to the BioW family. The protein in the C-terminal section; belongs to the class-II pyridoxal-phosphate-dependent aminotransferase family. BioF subfamily. Homodimer. Requires Mg(2+) as cofactor. It depends on pyridoxal 5'-phosphate as a cofactor.

The enzyme catalyses heptanedioate + ATP + CoA = 6-carboxyhexanoyl-CoA + AMP + diphosphate. It carries out the reaction 6-carboxyhexanoyl-[ACP] + L-alanine + H(+) = (8S)-8-amino-7-oxononanoate + holo-[ACP] + CO2. It functions in the pathway metabolic intermediate metabolism; pimeloyl-CoA biosynthesis; pimeloyl-CoA from pimelate: step 1/1. The protein operates within cofactor biosynthesis; biotin biosynthesis. Functionally, catalyzes both the decarboxylative condensation of pimeloyl-[acyl-carrier protein] and L-alanine to produce 8-amino-7-oxononanoate (AON), [acyl-carrier protein], and carbon dioxide, and the transformation of pimelate into pimeloyl-CoA with concomitant hydrolysis of ATP to AMP. In Corynebacterium kroppenstedtii (strain DSM 44385 / JCM 11950 / CIP 105744 / CCUG 35717), this protein is Biotin biosynthesis bifunctional protein BioWF (bioWF).